A 334-amino-acid chain; its full sequence is Heat-inducible transcription repressor HrcA (334 aa).

Belongs to the HrcA family.

In terms of biological role, negative regulator of class I heat shock genes (grpE-dnaK-dnaJ and groELS operons). Prevents heat-shock induction of these operons. This is Heat-inducible transcription repressor HrcA from Albidiferax ferrireducens (strain ATCC BAA-621 / DSM 15236 / T118) (Rhodoferax ferrireducens).